Consider the following 270-residue polypeptide: Tryptophan synthase alpha chain (270 aa).

Catalysis depends on proton acceptor residues Glu-49 and Asp-60.

It belongs to the TrpA family. In terms of assembly, tetramer of two alpha and two beta chains.

The catalysed reaction is (1S,2R)-1-C-(indol-3-yl)glycerol 3-phosphate + L-serine = D-glyceraldehyde 3-phosphate + L-tryptophan + H2O. Its pathway is amino-acid biosynthesis; L-tryptophan biosynthesis; L-tryptophan from chorismate: step 5/5. The alpha subunit is responsible for the aldol cleavage of indoleglycerol phosphate to indole and glyceraldehyde 3-phosphate. The protein is Tryptophan synthase alpha chain of Pseudomonas fluorescens (strain Pf0-1).